The sequence spans 267 residues: Hemin import ATP-binding protein HmuV (267 aa).

One can recognise an ABC transporter domain in the interval 3–243; that stretch reads LEVRGIEVWR…ELVARVFGLR (241 aa). 35-42 lines the ATP pocket; that stretch reads GPNGAGKS.

It belongs to the ABC transporter superfamily. Heme (hemin) importer (TC 3.A.1.14.5) family. As to quaternary structure, the complex is composed of two ATP-binding proteins (HmuV), two transmembrane proteins (HmuU) and a solute-binding protein (HmuT).

The protein resides in the cell inner membrane. Its function is as follows. Part of the ABC transporter complex HmuTUV involved in hemin import. Responsible for energy coupling to the transport system. This chain is Hemin import ATP-binding protein HmuV, found in Myxococcus xanthus (strain DK1622).